Reading from the N-terminus, the 333-residue chain is MAASTLGSAWGPLRLGVPGLCRRRPPRGLWARARRLSEPVASGRSVAAGSGLGASGTDRYCLELLRKRDYEGYLCSLLLPAESRSSAFALRAFNVELAQIKDSVSEKTIGLMRMQFWKKTVDDIYSDNPPHQPVAIELWKAVRRHNLTKRWLMKIIDEREKNLDDKAYRNIQELENYAENTQSSLLYLTLEILGIKDLHADHAASHIGKAQGIVTCLRATPYHGSRRRVFLPMDICMLHGVSQEDFLRKSQDRNVRDVVYDVASQAHLHLKHARSFHRSIPVKAFPAFLQTVALEDYLKKIQQVDFDLFHPSLQRKNTLLPLSLYIQSWRKRY.

A mitochondrion-targeting transit peptide spans 1–44 (MAASTLGSAWGPLRLGVPGLCRRRPPRGLWARARRLSEPVASGR).

This sequence belongs to the NDUFAF6 family.

The protein localises to the mitochondrion inner membrane. In terms of biological role, involved in the assembly of mitochondrial NADH:ubiquinone oxidoreductase complex (complex I) at early stages. May play a role in the biogenesis of complex I subunit MT-ND1. The sequence is that of NADH dehydrogenase (ubiquinone) complex I, assembly factor 6 (NDUFAF6) from Bos taurus (Bovine).